Here is a 1102-residue protein sequence, read N- to C-terminus: Trafficking protein particle complex II-specific subunit 130 (1102 aa).

Belongs to the TMEM1 family. Part of the multisubunit TRAPP (transport protein particle) II complex composed of BET3, BET5, TRS20, TRS23, TRS31, TRS33, TRS65, TRS120 and TRS130. Interacts with YPT31 and YPT32.

Its subcellular location is the golgi apparatus. Functionally, specific subunit of the TRAPP II complex, a highly conserved vesicle tethering complex that functions in the late Golgi as a guanine nucleotide exchange factor (GEF) for the Golgi YPT1 GTPase. TRS130 plays a role in the YPT GEF activity of TRAPP II in concert with the two other TRAPP II-specific subunits TRS65 and TRS120. Required for both the cytoplasm-to-vacuole targeting (Cvt) pathway and starvation-induced autophagy through its role in ATG8 and ATG9 trafficking. In Saccharomyces cerevisiae (strain ATCC 204508 / S288c) (Baker's yeast), this protein is Trafficking protein particle complex II-specific subunit 130 (TRS130).